Consider the following 453-residue polypeptide: Folate transporter 1 (453 aa).

N36 is a glycosylation site (N-linked (GlcNAc...) asparagine). 5 helical membrane-spanning segments follow: residues 48-68 (PYWT…TDIL), 73-93 (IVMI…FGKG), 102-122 (VSFG…YSIV), 136-156 (AAAL…ISTH), and 161-181 (LVLN…AIFL). N260 carries an N-linked (GlcNAc...) asparagine glycan. A run of 5 helical transmembrane segments spans residues 276 to 296 (VANG…SLFI), 306 to 326 (HGQM…YLCS), 331 to 351 (VLVA…LITA), 368 to 388 (IFGC…LVVV), and 401 to 421 (FVIY…FFMI).

The protein belongs to the reduced folate carrier (RFC) transporter (TC 2.A.48) family. In terms of tissue distribution, highly expressed in pharynx and posterior part of the intestine. Expressed at lower levels in the body wall muscles, head muscles, and vulva muscles. Highly expressed in the intestine of the early larva, levels decrease in the later stages of development.

Its subcellular location is the membrane. Functionally, folate transporter. The polypeptide is Folate transporter 1 (folt-1) (Caenorhabditis elegans).